The primary structure comprises 244 residues: uncharacterized protein (244 aa).

Transmembrane regions (helical) follow at residues 5-27 (KFAL…LLAV), 37-59 (IVMV…SRFL), 87-106 (LVFI…FYYG), 116-138 (LSLF…FFVA), 159-181 (FWIW…VQPS), and 196-218 (GVFN…RMVA).

The protein resides in the cell membrane. This is an uncharacterized protein from Archaeoglobus fulgidus (strain ATCC 49558 / DSM 4304 / JCM 9628 / NBRC 100126 / VC-16).